The sequence spans 518 residues: Protease Do-like 4, mitochondrial (518 aa).

Residues 1-23 constitute a mitochondrion transit peptide; sequence MLFRFLQTLARFCRFLLISVLGF. Residues 98–262 are serine protease; the sequence is ESGGSGFVIS…IPTPVIKHFL (165 aa). Catalysis depends on charge relay system residues His116, Asp147, and Ser225. Positions 278-358 constitute a PDZ domain; the sequence is DISYQLMENS…HFVSMKKLDE (81 aa).

Belongs to the peptidase S1C family.

Its subcellular location is the mitochondrion membrane. Functionally, putative serine protease. The sequence is that of Protease Do-like 4, mitochondrial (DEGP4) from Arabidopsis thaliana (Mouse-ear cress).